We begin with the raw amino-acid sequence, 239 residues long: MRPSQRRPDQLRAVMITRNFTCHAEGSVLVEFGATRVLCTASVEDTVPPFLRGRGQGWLTAEYGMLPRATHTRSAREAAKGKQSGRTQEIQRLIGRSLRAVVDLSALGERQIVIDCDVLQADGGTRTAAITGACVAVHDAFRKLVTEGKLPYSPLREFVAAVSVGMFQGVPVLDLDYAEDSGCDTDMNVVMTGAGGFVEVQGTAEGATFSRAELNALLELAESGIRRLVEAQKAAIDRN.

Residues Arg86 and 124 to 126 (GTR) contribute to the phosphate site.

The protein belongs to the RNase PH family. As to quaternary structure, homohexameric ring arranged as a trimer of dimers.

The enzyme catalyses tRNA(n+1) + phosphate = tRNA(n) + a ribonucleoside 5'-diphosphate. Phosphorolytic 3'-5' exoribonuclease that plays an important role in tRNA 3'-end maturation. Removes nucleotide residues following the 3'-CCA terminus of tRNAs; can also add nucleotides to the ends of RNA molecules by using nucleoside diphosphates as substrates, but this may not be physiologically important. Probably plays a role in initiation of 16S rRNA degradation (leading to ribosome degradation) during starvation. This is Ribonuclease PH from Aromatoleum aromaticum (strain DSM 19018 / LMG 30748 / EbN1) (Azoarcus sp. (strain EbN1)).